Here is a 546-residue protein sequence, read N- to C-terminus: Chaperonin GroEL 2 (546 aa).

ATP contacts are provided by residues 29–32 (TLGP), 86–90 (DGTTT), Gly-418, 482–484 (NAA), and Asp-498.

This sequence belongs to the chaperonin (HSP60) family. As to quaternary structure, forms a cylinder of 14 subunits composed of two heptameric rings stacked back-to-back. Interacts with the co-chaperonin GroES.

It localises to the cytoplasm. It catalyses the reaction ATP + H2O + a folded polypeptide = ADP + phosphate + an unfolded polypeptide.. Together with its co-chaperonin GroES, plays an essential role in assisting protein folding. The GroEL-GroES system forms a nano-cage that allows encapsulation of the non-native substrate proteins and provides a physical environment optimized to promote and accelerate protein folding. This chain is Chaperonin GroEL 2, found in Corynebacterium diphtheriae (strain ATCC 700971 / NCTC 13129 / Biotype gravis).